Reading from the N-terminus, the 616-residue chain is Dihydroxy-acid dehydratase (616 aa).

Aspartate 81 is a binding site for Mg(2+). Cysteine 122 serves as a coordination point for [2Fe-2S] cluster. Residues aspartate 123 and lysine 124 each coordinate Mg(2+). At lysine 124 the chain carries N6-carboxylysine. Residue cysteine 195 participates in [2Fe-2S] cluster binding. Glutamate 491 contacts Mg(2+). Serine 517 functions as the Proton acceptor in the catalytic mechanism.

This sequence belongs to the IlvD/Edd family. Homodimer. Requires [2Fe-2S] cluster as cofactor. Mg(2+) is required as a cofactor.

It catalyses the reaction (2R)-2,3-dihydroxy-3-methylbutanoate = 3-methyl-2-oxobutanoate + H2O. The catalysed reaction is (2R,3R)-2,3-dihydroxy-3-methylpentanoate = (S)-3-methyl-2-oxopentanoate + H2O. It participates in amino-acid biosynthesis; L-isoleucine biosynthesis; L-isoleucine from 2-oxobutanoate: step 3/4. It functions in the pathway amino-acid biosynthesis; L-valine biosynthesis; L-valine from pyruvate: step 3/4. In terms of biological role, functions in the biosynthesis of branched-chain amino acids. Catalyzes the dehydration of (2R,3R)-2,3-dihydroxy-3-methylpentanoate (2,3-dihydroxy-3-methylvalerate) into 2-oxo-3-methylpentanoate (2-oxo-3-methylvalerate) and of (2R)-2,3-dihydroxy-3-methylbutanoate (2,3-dihydroxyisovalerate) into 2-oxo-3-methylbutanoate (2-oxoisovalerate), the penultimate precursor to L-isoleucine and L-valine, respectively. The polypeptide is Dihydroxy-acid dehydratase (Shewanella woodyi (strain ATCC 51908 / MS32)).